Consider the following 204-residue polypeptide: ATP-dependent Clp protease proteolytic subunit (204 aa).

Ser101 functions as the Nucleophile in the catalytic mechanism. His126 is an active-site residue.

Belongs to the peptidase S14 family. As to quaternary structure, component of the chloroplastic Clp protease core complex.

The protein resides in the plastid. The protein localises to the chloroplast stroma. The enzyme catalyses Hydrolysis of proteins to small peptides in the presence of ATP and magnesium. alpha-casein is the usual test substrate. In the absence of ATP, only oligopeptides shorter than five residues are hydrolyzed (such as succinyl-Leu-Tyr-|-NHMec, and Leu-Tyr-Leu-|-Tyr-Trp, in which cleavage of the -Tyr-|-Leu- and -Tyr-|-Trp bonds also occurs).. Cleaves peptides in various proteins in a process that requires ATP hydrolysis. Has a chymotrypsin-like activity. Plays a major role in the degradation of misfolded proteins. The chain is ATP-dependent Clp protease proteolytic subunit from Phalaenopsis aphrodite subsp. formosana (Moth orchid).